The primary structure comprises 513 residues: ATP synthase subunit alpha (513 aa).

169–176 lines the ATP pocket; that stretch reads GDRQTGKT.

This sequence belongs to the ATPase alpha/beta chains family. In terms of assembly, F-type ATPases have 2 components, CF(1) - the catalytic core - and CF(0) - the membrane proton channel. CF(1) has five subunits: alpha(3), beta(3), gamma(1), delta(1), epsilon(1). CF(0) has three main subunits: a(1), b(2) and c(9-12). The alpha and beta chains form an alternating ring which encloses part of the gamma chain. CF(1) is attached to CF(0) by a central stalk formed by the gamma and epsilon chains, while a peripheral stalk is formed by the delta and b chains.

It is found in the cell inner membrane. It carries out the reaction ATP + H2O + 4 H(+)(in) = ADP + phosphate + 5 H(+)(out). Functionally, produces ATP from ADP in the presence of a proton gradient across the membrane. The alpha chain is a regulatory subunit. The sequence is that of ATP synthase subunit alpha from Cupriavidus necator (strain ATCC 17699 / DSM 428 / KCTC 22496 / NCIMB 10442 / H16 / Stanier 337) (Ralstonia eutropha).